A 100-amino-acid polypeptide reads, in one-letter code: NADH-quinone oxidoreductase subunit K (100 aa).

3 helical membrane passes run 1 to 21, 28 to 48, and 64 to 84; these read MIGLNHYLIVSGLLFCIGLAG, ILLLFFSTEIMLNAINIGFIA, and FIIAIAASEVAIGLGLVILWF.

Belongs to the complex I subunit 4L family. In terms of assembly, NDH-1 is composed of 14 different subunits. Subunits NuoA, H, J, K, L, M, N constitute the membrane sector of the complex.

Its subcellular location is the cell inner membrane. The catalysed reaction is a quinone + NADH + 5 H(+)(in) = a quinol + NAD(+) + 4 H(+)(out). In terms of biological role, NDH-1 shuttles electrons from NADH, via FMN and iron-sulfur (Fe-S) centers, to quinones in the respiratory chain. The immediate electron acceptor for the enzyme in this species is believed to be ubiquinone. Couples the redox reaction to proton translocation (for every two electrons transferred, four hydrogen ions are translocated across the cytoplasmic membrane), and thus conserves the redox energy in a proton gradient. The chain is NADH-quinone oxidoreductase subunit K from Helicobacter acinonychis (strain Sheeba).